We begin with the raw amino-acid sequence, 519 residues long: Keratin, type II cytoskeletal 1b (519 aa).

Positions 1–166 (MSRQFSSQSA…DPEIQKIKTQ (166 aa)) are head. Omega-N-methylarginine is present on residues R81 and R95. Residues 167 to 202 (EREQIKTLNNKFASFIDKVRFLEQQNQVLQTKWELL) form a coil 1A region. The IF rod domain occupies 167 to 480 (EREQIKTLNN…ELLEGEESRM (314 aa)). Residues 203 to 221 (QQVNTSTRTSSLEPIFEEF) form a linker 1 region. Residues 222-313 (INQLQRQVDV…YLFDTELSQI (92 aa)) form a coil 1B region. Positions 314 to 337 (QTHVSDTNVILSMDNNRSLDLDSI) are linker 12. Residues 338 to 476 (INAVRTQYEL…ATYRELLEGE (139 aa)) are coil 2. The tract at residues 477–519 (ESRMSGALQSQVSIWALPSNEGNDLGERLHDPQSQVPVPKLGC) is tail. Residues 499 to 519 (NDLGERLHDPQSQVPVPKLGC) are disordered.

Belongs to the intermediate filament family. Undergoes deimination of some arginine residues (citrullination).

This is Keratin, type II cytoskeletal 1b (Krt77) from Rattus norvegicus (Rat).